We begin with the raw amino-acid sequence, 218 residues long: Adenylate kinase (218 aa).

Residue 10–15 (GAGKGT) participates in ATP binding. Residues 30-59 (STGDMLRAAVKAGTPLGIEAKKVMDAGGLV) form an NMP region. AMP is bound by residues threonine 31, arginine 36, 57 to 59 (GLV), 85 to 88 (GFPR), and glutamine 92. Positions 122–159 (GRRSHAASGRTYHVKFNPPKVAGVDDVTGEPLIQRDDD) are LID. ATP is bound by residues arginine 123 and 132–133 (TY). Arginine 156 and arginine 167 together coordinate AMP. Glycine 203 lines the ATP pocket.

It belongs to the adenylate kinase family. In terms of assembly, monomer.

Its subcellular location is the cytoplasm. It carries out the reaction AMP + ATP = 2 ADP. The protein operates within purine metabolism; AMP biosynthesis via salvage pathway; AMP from ADP: step 1/1. Its function is as follows. Catalyzes the reversible transfer of the terminal phosphate group between ATP and AMP. Plays an important role in cellular energy homeostasis and in adenine nucleotide metabolism. This chain is Adenylate kinase, found in Albidiferax ferrireducens (strain ATCC BAA-621 / DSM 15236 / T118) (Rhodoferax ferrireducens).